Here is a 353-residue protein sequence, read N- to C-terminus: Photosystem II D2 protein (353 aa).

T2 bears the N-acetylthreonine mark. T2 bears the Phosphothreonine mark. Residues 41–61 (CAYFALGGWFTGTTFVTSWYT) form a helical membrane-spanning segment. H118 contacts chlorophyll a. Residues 125 to 141 (GFMLRQFELARSVQLRP) traverse the membrane as a helical segment. 2 residues coordinate pheophytin a: Q130 and N143. The chain crosses the membrane as a helical span at residues 153 to 166 (VFVSVFLIYPLGQS). Residue H198 participates in chlorophyll a binding. A helical membrane pass occupies residues 208–228 (AALLCAIHGATVENTLFEDGD). A plastoquinone is bound by residues H215 and F262. H215 is a Fe cation binding site. H269 provides a ligand contact to Fe cation. The chain crosses the membrane as a helical span at residues 279 to 295 (GLWMSALGVVGLALNLR).

It belongs to the reaction center PufL/M/PsbA/D family. In terms of assembly, PSII is composed of 1 copy each of membrane proteins PsbA, PsbB, PsbC, PsbD, PsbE, PsbF, PsbH, PsbI, PsbJ, PsbK, PsbL, PsbM, PsbT, PsbX, PsbY, PsbZ, Psb30/Ycf12, at least 3 peripheral proteins of the oxygen-evolving complex and a large number of cofactors. It forms dimeric complexes. It depends on The D1/D2 heterodimer binds P680, chlorophylls that are the primary electron donor of PSII, and subsequent electron acceptors. It shares a non-heme iron and each subunit binds pheophytin, quinone, additional chlorophylls, carotenoids and lipids. There is also a Cl(-1) ion associated with D1 and D2, which is required for oxygen evolution. The PSII complex binds additional chlorophylls, carotenoids and specific lipids. as a cofactor.

Its subcellular location is the plastid. The protein resides in the chloroplast thylakoid membrane. It carries out the reaction 2 a plastoquinone + 4 hnu + 2 H2O = 2 a plastoquinol + O2. Its function is as follows. Photosystem II (PSII) is a light-driven water:plastoquinone oxidoreductase that uses light energy to abstract electrons from H(2)O, generating O(2) and a proton gradient subsequently used for ATP formation. It consists of a core antenna complex that captures photons, and an electron transfer chain that converts photonic excitation into a charge separation. The D1/D2 (PsbA/PsbD) reaction center heterodimer binds P680, the primary electron donor of PSII as well as several subsequent electron acceptors. D2 is needed for assembly of a stable PSII complex. The polypeptide is Photosystem II D2 protein (Nymphaea alba (White water-lily)).